The sequence spans 211 residues: Dephospho-CoA kinase (211 aa).

Residues 2-204 (IIGLTGSIGM…SGVRRWRRGK (203 aa)) enclose the DPCK domain. 10–15 (GMGKST) provides a ligand contact to ATP.

This sequence belongs to the CoaE family.

It is found in the cytoplasm. It carries out the reaction 3'-dephospho-CoA + ATP = ADP + CoA + H(+). It participates in cofactor biosynthesis; coenzyme A biosynthesis; CoA from (R)-pantothenate: step 5/5. Functionally, catalyzes the phosphorylation of the 3'-hydroxyl group of dephosphocoenzyme A to form coenzyme A. This is Dephospho-CoA kinase from Rhodospirillum rubrum (strain ATCC 11170 / ATH 1.1.1 / DSM 467 / LMG 4362 / NCIMB 8255 / S1).